We begin with the raw amino-acid sequence, 212 residues long: Protein GET1 (212 aa).

The Lumenal segment spans residues 1 to 4 (MASL). Residues 5–24 (LLFVLVIQIITYLINTIGAR) form a helical membrane-spanning segment. Topologically, residues 25–110 (TIDSLLWLLY…SFDWTIKTVR (86 aa)) are cytoplasmic. Residues 75-99 (AKLRRRHDKAMEEYDVKNKKLSALK) adopt a coiled-coil conformation. The chain crosses the membrane as a helical span at residues 111-131 (WVSTTGVTVILQFWFSKSPIF). At 132–155 (DLPRGWLPWQVEWILSFPRAPLGT) the chain is on the lumenal side. Residues 156–172 (VSIQVWGGACGTVIALV) traverse the membrane as a helical segment. Residues 173–212 (GGAMGVAAPAFKKINQPRGEAQKMGTPRGSREQTPVRKTQ) lie on the Cytoplasmic side of the membrane. The segment at 189–212 (PRGEAQKMGTPRGSREQTPVRKTQ) is disordered. The segment covering 201–212 (GSREQTPVRKTQ) has biased composition (basic and acidic residues).

It belongs to the WRB/GET1 family. Interacts with GET3.

Its subcellular location is the endoplasmic reticulum membrane. Required for the post-translational delivery of tail-anchored (TA) proteins to the endoplasmic reticulum. Acts as a membrane receptor for soluble GET3, which recognizes and selectively binds the transmembrane domain of TA proteins in the cytosol. The sequence is that of Protein GET1 from Arthroderma otae (strain ATCC MYA-4605 / CBS 113480) (Microsporum canis).